Here is a 402-residue protein sequence, read N- to C-terminus: CCA-adding enzyme (402 aa).

Residues glycine 32 and arginine 35 each contribute to the ATP site. CTP is bound by residues glycine 32 and arginine 35. Mg(2+)-binding residues include aspartate 45 and aspartate 47. The ATP site is built by arginine 119, aspartate 162, arginine 165, arginine 168, and arginine 171. The CTP site is built by arginine 119, aspartate 162, arginine 165, arginine 168, and arginine 171.

This sequence belongs to the tRNA nucleotidyltransferase/poly(A) polymerase family. Bacterial CCA-adding enzyme type 3 subfamily. In terms of assembly, homodimer. Requires Mg(2+) as cofactor.

The enzyme catalyses a tRNA precursor + 2 CTP + ATP = a tRNA with a 3' CCA end + 3 diphosphate. It carries out the reaction a tRNA with a 3' CCA end + 2 CTP + ATP = a tRNA with a 3' CCACCA end + 3 diphosphate. Its function is as follows. Catalyzes the addition and repair of the essential 3'-terminal CCA sequence in tRNAs without using a nucleic acid template. Adds these three nucleotides in the order of C, C, and A to the tRNA nucleotide-73, using CTP and ATP as substrates and producing inorganic pyrophosphate. tRNA 3'-terminal CCA addition is required both for tRNA processing and repair. Also involved in tRNA surveillance by mediating tandem CCA addition to generate a CCACCA at the 3' terminus of unstable tRNAs. While stable tRNAs receive only 3'-terminal CCA, unstable tRNAs are marked with CCACCA and rapidly degraded. The polypeptide is CCA-adding enzyme (Lactococcus lactis subsp. cremoris (strain SK11)).